The following is a 393-amino-acid chain: Prokineticin receptor 1 (393 aa).

Over 1–62 (METTVGALGE…TNSRTFFAAK (62 aa)) the chain is Extracellular. Asparagine 11 carries an N-linked (GlcNAc...) asparagine glycan. Residues 63–83 (IVIGMALVGIMLVCGIGNFIF) traverse the membrane as a helical segment. At 84 to 98 (ITALARYKKLRNLTN) the chain is on the cytoplasmic side. A helical membrane pass occupies residues 99–119 (LLIANLAISDFLVAIVCCPFE). Residues 120–146 (MDYYVVRQLSWEHGHVLCASVNYLRTV) lie on the Extracellular side of the membrane. Cysteines 137 and 217 form a disulfide. A helical membrane pass occupies residues 147–167 (SLYVSTNALLAIAIDRYLAIV). The Cytoplasmic segment spans residues 168–179 (HPLRPRMKCQTA). Residues 180–200 (AGLIFLVWSVSILIAIPAAYF) traverse the membrane as a helical segment. Residues 201–232 (TTETVLVIVERQEKIFCGQIWPVDQQFYYRSY) are Extracellular-facing. The helical transmembrane segment at 233-253 (FLLVFGLEFVGPVVAMTLCYA) threads the bilayer. Residues 254-282 (RVSRELWFKAVPGFQTEQIRRRLRCRRRT) are Cytoplasmic-facing. The chain crosses the membrane as a helical span at residues 283–303 (VLGLVCVLSAYVLCWAPFYGF). The Extracellular portion of the chain corresponds to 304–322 (TIVRDFFPSVFVKEKHYLT). Residues 323 to 343 (AFYVVECIAMSNSMINTLCFV) traverse the membrane as a helical segment. Residues 344-393 (TVRNNTSKYLKRILRLQWRASPSGSKASADLDLRTTGIPATEEVDCIRLK) are Cytoplasmic-facing.

The protein belongs to the G-protein coupled receptor 1 family. Expressed at high levels in the heart, skeletal muscle and pancreas. Expressed at lower levels in the brain, lung, liver and kidney.

It is found in the cell membrane. Receptor for prokineticin 1. Exclusively coupled to the G(q) subclass of heteromeric G proteins. Activation leads to mobilization of calcium, stimulation of phosphoinositide turnover and activation of p44/p42 mitogen-activated protein kinase. May play a role during early pregnancy. In Mus musculus (Mouse), this protein is Prokineticin receptor 1 (Prokr1).